The following is a 229-amino-acid chain: 2,3-bisphosphoglycerate-dependent phosphoglycerate mutase (229 aa).

Residues Arg8 to Asn15, Thr21 to Gly22, Arg60, Glu87 to Tyr90, Lys98, Arg114 to Arg115, and Gly183 to Asn184 contribute to the substrate site. His9 acts as the Tele-phosphohistidine intermediate in catalysis. Glu87 serves as the catalytic Proton donor/acceptor.

It belongs to the phosphoglycerate mutase family. BPG-dependent PGAM subfamily. As to quaternary structure, homodimer.

It catalyses the reaction (2R)-2-phosphoglycerate = (2R)-3-phosphoglycerate. Its pathway is carbohydrate degradation; glycolysis; pyruvate from D-glyceraldehyde 3-phosphate: step 3/5. In terms of biological role, catalyzes the interconversion of 2-phosphoglycerate and 3-phosphoglycerate. The protein is 2,3-bisphosphoglycerate-dependent phosphoglycerate mutase of Polynucleobacter asymbioticus (strain DSM 18221 / CIP 109841 / QLW-P1DMWA-1) (Polynucleobacter necessarius subsp. asymbioticus).